A 352-amino-acid polypeptide reads, in one-letter code: Protein MGF 360-9L (352 aa).

The protein belongs to the asfivirus MGF 360 family. As to quaternary structure, interacts with host STAT1; this interaction mediates STAT1 degradation through apoptosis. Interacts with host STAT2; this interaction mediates STAT2 degradation through the proteasome.

The protein resides in the host cytoplasm. Functionally, plays a role in virus cell tropism, and may be required for efficient virus replication in macrophages. The polypeptide is Protein MGF 360-9L (Ornithodoros (relapsing fever ticks)).